Consider the following 475-residue polypeptide: Ribulose bisphosphate carboxylase large chain (475 aa).

A propeptide spanning residues 1-2 (MS) is cleaved from the precursor. At Pro3 the chain carries N-acetylproline. Lys14 bears the N6,N6,N6-trimethyllysine mark. Residues Asn123 and Thr173 each contribute to the substrate site. Lys175 acts as the Proton acceptor in catalysis. Position 177 (Lys177) interacts with substrate. Positions 201, 203, and 204 each coordinate Mg(2+). N6-carboxylysine is present on Lys201. The Proton acceptor role is filled by His294. Substrate is bound by residues Arg295, His327, and Ser379.

Belongs to the RuBisCO large chain family. Type I subfamily. In terms of assembly, heterohexadecamer of 8 large chains and 8 small chains; disulfide-linked. The disulfide link is formed within the large subunit homodimers. It depends on Mg(2+) as a cofactor. Post-translationally, the disulfide bond which can form in the large chain dimeric partners within the hexadecamer appears to be associated with oxidative stress and protein turnover.

The protein resides in the plastid. The protein localises to the chloroplast. The catalysed reaction is 2 (2R)-3-phosphoglycerate + 2 H(+) = D-ribulose 1,5-bisphosphate + CO2 + H2O. It catalyses the reaction D-ribulose 1,5-bisphosphate + O2 = 2-phosphoglycolate + (2R)-3-phosphoglycerate + 2 H(+). RuBisCO catalyzes two reactions: the carboxylation of D-ribulose 1,5-bisphosphate, the primary event in carbon dioxide fixation, as well as the oxidative fragmentation of the pentose substrate in the photorespiration process. Both reactions occur simultaneously and in competition at the same active site. The chain is Ribulose bisphosphate carboxylase large chain from Liquidambar styraciflua (Sweetgum tree).